The following is a 315-amino-acid chain: Methionyl-tRNA formyltransferase (315 aa).

113–116 (SLLP) contacts (6S)-5,6,7,8-tetrahydrofolate.

This sequence belongs to the Fmt family.

It catalyses the reaction L-methionyl-tRNA(fMet) + (6R)-10-formyltetrahydrofolate = N-formyl-L-methionyl-tRNA(fMet) + (6S)-5,6,7,8-tetrahydrofolate + H(+). Functionally, attaches a formyl group to the free amino group of methionyl-tRNA(fMet). The formyl group appears to play a dual role in the initiator identity of N-formylmethionyl-tRNA by promoting its recognition by IF2 and preventing the misappropriation of this tRNA by the elongation apparatus. The protein is Methionyl-tRNA formyltransferase of Klebsiella pneumoniae subsp. pneumoniae (strain ATCC 700721 / MGH 78578).